The chain runs to 556 residues: Formate--tetrahydrofolate ligase (556 aa).

65 to 72 (TPAGEGKS) contacts ATP.

The protein belongs to the formate--tetrahydrofolate ligase family.

It carries out the reaction (6S)-5,6,7,8-tetrahydrofolate + formate + ATP = (6R)-10-formyltetrahydrofolate + ADP + phosphate. It participates in one-carbon metabolism; tetrahydrofolate interconversion. In Streptococcus pneumoniae (strain ATCC 700669 / Spain 23F-1), this protein is Formate--tetrahydrofolate ligase.